We begin with the raw amino-acid sequence, 357 residues long: SrfA-induced gene J protein (357 aa).

Residues 1–29 (MGRVEDQIKDNYNSLSHEGERLNREAKIE) form a disordered region. Residues 5 to 51 (EDQIKDNYNSLSHEGERLNREAKIESEKLKNNAKLDAKDMKKDIDES) adopt a coiled-coil conformation. Positions 17–29 (HEGERLNREAKIE) are enriched in basic and acidic residues. 3 N-linked (GlcNAc...) asparagine glycosylation sites follow: Asn-114, Asn-157, and Asn-172. 2 coiled-coil regions span residues 150-177 (KNFK…SNKI) and 223-270 (DETK…DAIE). A helical membrane pass occupies residues 290–307 (IWGSIGLIGGATATSYLF).

Its subcellular location is the membrane. This is SrfA-induced gene J protein (sigJ) from Dictyostelium discoideum (Social amoeba).